Consider the following 139-residue polypeptide: Putative nickel-responsive regulator (139 aa).

Ni(2+)-binding residues include His-79, His-90, His-92, and Cys-98.

This sequence belongs to the transcriptional regulatory CopG/NikR family. It depends on Ni(2+) as a cofactor.

In terms of biological role, transcriptional regulator. The polypeptide is Putative nickel-responsive regulator (Geobacter metallireducens (strain ATCC 53774 / DSM 7210 / GS-15)).